The chain runs to 230 residues: Response regulator MprA (230 aa).

One can recognise a Response regulatory domain in the interval R4 to L118. 4-aspartylphosphate is present on D48. Positions S129–E227 form a DNA-binding region, ompR/PhoB-type.

In terms of processing, phosphorylated and dephosphorylated by MprB.

It is found in the cytoplasm. Member of the two-component regulatory system MprB/MprA which contributes to maintaining a balance among several systems involved in stress resistance and is required for establishment and maintenance of persistent infection in the host. Functions as a transcriptional regulator that recognizes a 19-bp nucleotide motif comprizing two loosely conserved 8-bp direct DNA-binding motif repeats separated by a 3-bp spacer region. In Mycobacterium tuberculosis (strain ATCC 25177 / H37Ra), this protein is Response regulator MprA (mprA).